The following is a 248-amino-acid chain: Aspartate/glutamate leucyltransferase (248 aa).

This sequence belongs to the R-transferase family. Bpt subfamily.

The protein localises to the cytoplasm. It carries out the reaction N-terminal L-glutamyl-[protein] + L-leucyl-tRNA(Leu) = N-terminal L-leucyl-L-glutamyl-[protein] + tRNA(Leu) + H(+). It catalyses the reaction N-terminal L-aspartyl-[protein] + L-leucyl-tRNA(Leu) = N-terminal L-leucyl-L-aspartyl-[protein] + tRNA(Leu) + H(+). In terms of biological role, functions in the N-end rule pathway of protein degradation where it conjugates Leu from its aminoacyl-tRNA to the N-termini of proteins containing an N-terminal aspartate or glutamate. The sequence is that of Aspartate/glutamate leucyltransferase from Methylorubrum populi (strain ATCC BAA-705 / NCIMB 13946 / BJ001) (Methylobacterium populi).